A 405-amino-acid chain; its full sequence is Insertion element IS110 uncharacterized 43.6 kDa protein (405 aa).

This Streptomyces coelicolor (strain ATCC BAA-471 / A3(2) / M145) protein is Insertion element IS110 uncharacterized 43.6 kDa protein.